Reading from the N-terminus, the 89-residue chain is Small ribosomal subunit protein uS15 (89 aa).

A compositionally biased stretch (basic and acidic residues) spans 1–21 (MVLDPTQKKSVIDAHAKHEGD). Residues 1–24 (MVLDPTQKKSVIDAHAKHEGDTGS) form a disordered region.

Belongs to the universal ribosomal protein uS15 family. As to quaternary structure, part of the 30S ribosomal subunit. Forms a bridge to the 50S subunit in the 70S ribosome, contacting the 23S rRNA.

One of the primary rRNA binding proteins, it binds directly to 16S rRNA where it helps nucleate assembly of the platform of the 30S subunit by binding and bridging several RNA helices of the 16S rRNA. Its function is as follows. Forms an intersubunit bridge (bridge B4) with the 23S rRNA of the 50S subunit in the ribosome. The sequence is that of Small ribosomal subunit protein uS15 from Desulfovibrio desulfuricans (strain ATCC 27774 / DSM 6949 / MB).